The following is a 282-amino-acid chain: Putative hydrolase Bcep18194_B0137 (282 aa).

Mg(2+) contacts are provided by Glu124, Glu126, and Asp155.

The protein belongs to the FAH family. Requires Mg(2+) as cofactor.

The polypeptide is Putative hydrolase Bcep18194_B0137 (Burkholderia lata (strain ATCC 17760 / DSM 23089 / LMG 22485 / NCIMB 9086 / R18194 / 383)).